We begin with the raw amino-acid sequence, 529 residues long: Structure-specific endonuclease subunit SLX1 homolog 1 (529 aa).

In terms of domain architecture, GIY-YIG spans 4–89 (RFHCVYLLTS…PTKSTRLKTQ (86 aa)). The SLX1-type zinc finger occupies 231–364 (CALCSLPLRS…PCQPCPCPLC (134 aa)). Disordered regions lie at residues 275–305 (VTMG…MDAH), 409–437 (NSSL…YCGD), and 470–501 (SVSL…RMTD). Over residues 282-297 (RNERSGEYSNKIKDDS) the composition is skewed to basic and acidic residues.

Belongs to the SLX1 family. In terms of assembly, forms a heterodimer with a member of the SLX4 family. The cofactor is a divalent metal cation.

The protein resides in the nucleus. In terms of biological role, catalytic subunit of a heterodimeric structure-specific endonuclease that resolves DNA secondary structures generated during DNA repair and recombination. Has endonuclease activity towards branched DNA substrates, introducing single-strand cuts in duplex DNA close to junctions with ss-DNA. The chain is Structure-specific endonuclease subunit SLX1 homolog 1 from Trypanosoma cruzi (strain CL Brener).